Consider the following 108-residue polypeptide: Ig kappa chain V-V region MOPC 149 (108 aa).

Positions 1-23 (DIQMTQSPDYLSASVGETVTITC) are framework-1. Cysteines 23 and 88 form a disulfide. Residues 24–34 (RASENIYSYLA) are complementarity-determining-1. The tract at residues 35–49 (WYQQKQGKSPQLLVY) is framework-2. Residues 50 to 56 (DAKTLVE) are complementarity-determining-2. Positions 57–88 (GVPSRFSGSGSGTQFSLKINSLQPEDFGSYYC) are framework-3. A complementarity-determining-3 region spans residues 89-97 (QHHYGIPFT). The framework-4 stretch occupies residues 98 to 108 (FGSGTKLEIKR).

This Mus musculus (Mouse) protein is Ig kappa chain V-V region MOPC 149.